The primary structure comprises 702 residues: Acetylcholinesterase (702 aa).

The N-terminal stretch at 1–36 (MEIRGLITRLLGPCHLRHLILCSLGLYSILVQSVHC) is a signal peptide. The segment at 107–134 (HIHSTTTRRRGLTRRESSSDATDSDPLV) is disordered. A glycan (N-linked (GlcNAc...) asparagine) is linked at N187. Residues C195 and C222 are joined by a disulfide bond. S327 acts as the Acyl-ester intermediate in catalysis. C381 and C394 are disulfide-bonded. Residues E453 and H567 each act as charge relay system in the active site. A disulfide bridge links C529 with C650. The N-linked (GlcNAc...) asparagine glycan is linked to N637.

It belongs to the type-B carboxylesterase/lipase family.

It is found in the synapse. It localises to the secreted. Its subcellular location is the cell membrane. It catalyses the reaction acetylcholine + H2O = choline + acetate + H(+). Its function is as follows. Rapidly hydrolyzes choline released into the synapse. This chain is Acetylcholinesterase (ACHE1), found in Culex pipiens (House mosquito).